Here is a 209-residue protein sequence, read N- to C-terminus: Dual specificity phosphatase 29 (209 aa).

The Tyrosine-protein phosphatase domain maps to 44-193; it reads NHVNEVWPNL…LRELDIQLAL (150 aa). 137 to 144 provides a ligand contact to substrate; the sequence is NCAMGRSR. The active-site Phosphocysteine intermediate is the Cys-138.

It belongs to the protein-tyrosine phosphatase family. Non-receptor class dual specificity subfamily.

It is found in the cytoplasm. It localises to the nucleus. It catalyses the reaction O-phospho-L-tyrosyl-[protein] + H2O = L-tyrosyl-[protein] + phosphate. The catalysed reaction is O-phospho-L-seryl-[protein] + H2O = L-seryl-[protein] + phosphate. The enzyme catalyses O-phospho-L-threonyl-[protein] + H2O = L-threonyl-[protein] + phosphate. Its function is as follows. Dual specificity phosphatase able to dephosphorylate phosphotyrosine, phosphoserine and phosphothreonine residues within the same substrate, with a preference for phosphotyrosine as a substrate. Involved in the modulation of AMPK and MAPK1/2 signaling pathways. In Xenopus tropicalis (Western clawed frog), this protein is Dual specificity phosphatase 29 (dusp29).